We begin with the raw amino-acid sequence, 265 residues long: NAD kinase 2 (265 aa).

N51 serves as the catalytic Proton acceptor. NAD(+) is bound by residues 122–123, R149, D151, 162–167, A186, and N226; these read NE and TAYNKS.

The protein belongs to the NAD kinase family. It depends on a divalent metal cation as a cofactor.

The protein resides in the cytoplasm. The catalysed reaction is NAD(+) + ATP = ADP + NADP(+) + H(+). Involved in the regulation of the intracellular balance of NAD and NADP, and is a key enzyme in the biosynthesis of NADP. Catalyzes specifically the phosphorylation on 2'-hydroxyl of the adenosine moiety of NAD to yield NADP. This is NAD kinase 2 from Halalkalibacterium halodurans (strain ATCC BAA-125 / DSM 18197 / FERM 7344 / JCM 9153 / C-125) (Bacillus halodurans).